Consider the following 362-residue polypeptide: Acetylglutamate kinase (362 aa).

Over residues Met-1 to Ser-11 the composition is skewed to pro residues. The tract at residues Met-1 to Arg-42 is disordered. Residues Gly-106 to Gly-107, Arg-128, and Asn-227 each bind substrate. A disordered region spans residues Met-329–Pro-362. The span at Ala-346 to Gly-355 shows a compositional bias: low complexity.

Belongs to the acetylglutamate kinase family. ArgB subfamily.

It is found in the cytoplasm. It catalyses the reaction N-acetyl-L-glutamate + ATP = N-acetyl-L-glutamyl 5-phosphate + ADP. Its pathway is amino-acid biosynthesis; L-arginine biosynthesis; N(2)-acetyl-L-ornithine from L-glutamate: step 2/4. In terms of biological role, catalyzes the ATP-dependent phosphorylation of N-acetyl-L-glutamate. The chain is Acetylglutamate kinase from Frankia casuarinae (strain DSM 45818 / CECT 9043 / HFP020203 / CcI3).